A 118-amino-acid chain; its full sequence is DNA-binding protein inhibitor ID-3-A (118 aa).

The bHLH domain occupies 32–84 (SHKGPGMDEPMGLLYDMNGCYSKLKELVPGIPQGSKLSQVEILQHVIDYIFDL).

In terms of assembly, homodimer. Heterodimer with other HLH proteins. Interacts (via HLH domain) with the bHLH protein hes4/hairy2 (via Orange domain). Interacts with stat3. In terms of tissue distribution, at gastrula stage, expressed in all three germ layers, but becomes localized to discrete domains of the developing nervous system during neurulation, including the anterior neural plate, cement gland, eye anlagen, otic placode and both cranial and trunk premigratory and early migratory neural crest cells. Also expressed in the most dorsal and ventral portions of the myotome, the developing heart and anterior blood islets, and in the tail fin mesenchyme. Expressed at a low level in limbs, with expression decreasing as limbs develop, but expressed at a high level in blastemas (regenerated limbs), where expression is localized to both the blastermal epidermis and mesenchyme. Widely expressed in adults including the liver and heart.

It is found in the nucleus. Transcriptional regulator (lacking a basic DNA binding domain) which negatively regulates the basic helix-loop-helix (bHLH) transcription factors by forming heterodimers and inhibiting their DNA binding and transcriptional activity. Influences cell fate decisions in the embryo by sequestering and blocking the activity of the bHLH transcription factors that control these decisions. Inhibits the binding of myogenic bHLH-containing complexes to E-box DNA, thereby preventing activation of muscle-specific target genes. Also inhibits the activity of neurogenic factor neurod1/neuroD. Plays a role in cell cycle progression and survival of neural crest progenitors; binding to either hes4-B/hairy2b or stat3 blocks the formation of transcription factor complexes and the repressor function of hes4-B/hairy2B, to allow neural crest progenitors to differentiate. May play a role in the regulation of the circadian rhythm. The chain is DNA-binding protein inhibitor ID-3-A (id3-a) from Xenopus laevis (African clawed frog).